Here is a 344-residue protein sequence, read N- to C-terminus: Methionine import ATP-binding protein MetN (344 aa).

The ABC transporter domain occupies 2 to 241 (IEINRVNKIF…PKTALAQEFI (240 aa)). 38–45 (GSSGAGKS) is a binding site for ATP.

It belongs to the ABC transporter superfamily. Methionine importer (TC 3.A.1.24) family. As to quaternary structure, the complex is composed of two ATP-binding proteins (MetN), two transmembrane proteins (MetI) and a solute-binding protein (MetQ).

The protein localises to the cell inner membrane. It catalyses the reaction L-methionine(out) + ATP + H2O = L-methionine(in) + ADP + phosphate + H(+). The catalysed reaction is D-methionine(out) + ATP + H2O = D-methionine(in) + ADP + phosphate + H(+). In terms of biological role, part of the ABC transporter complex MetNIQ involved in methionine import. Responsible for energy coupling to the transport system. The chain is Methionine import ATP-binding protein MetN from Aliivibrio fischeri (strain ATCC 700601 / ES114) (Vibrio fischeri).